A 327-amino-acid chain; its full sequence is NF-kappa-B inhibitor delta (327 aa).

The interval 1–40 (MEDSLDTRLYPEPSLSQVGSWRVSSLPSGSPQLPSPTGPS) is disordered. Over residues 14-23 (SLSQVGSWRV) the composition is skewed to polar residues. ANK repeat units lie at residues 62 to 97 (EGDT…IREH), 98 to 127 (KGKT…EPNA), 131 to 160 (QGRS…QVDL), 166 to 215 (EGLT…SHTS), 220 to 250 (SNKT…DLRA), and 257 to 290 (HGNT…DPTL). Positions 293–327 (LENEQPVHLLRPGPGPEGLRQLLKRSRTAPPGLSS) are disordered.

The protein belongs to the NF-kappa-B inhibitor family. In terms of assembly, interacts with NFKB1, RELA and RELB; in the nucleus. Specifically expressed in spleen and at low levels in thymus. Expressed in a population of antigen-presenting dendritic cells which may act as regulators of systemic inflammatory response.

The protein resides in the nucleus. Its function is as follows. Regulates the expression of IL-2, IL-6, and other cytokines through regulation on NF-kappa-B activity. Functions in the regulation of inflammatory responses. Involved in the induction of T helper 17 cells (Th17) differentiation upon recognition of antigen by T cell antigen receptor (TCR). According to PubMed:11931770, it may also regulate TCR-induced negative selection of thymocytes. The polypeptide is NF-kappa-B inhibitor delta (Nfkbid) (Mus musculus (Mouse)).